The primary structure comprises 220 residues: B-cell antigen receptor complex-associated protein alpha chain (220 aa).

Positions 1–28 (MPGGLEALRALPLLLFLSYACLGPGCQA) are cleaved as a signal peptide. The region spanning 29–117 (LRVEGGPPSL…ILKRSCGTYL (89 aa)) is the Ig-like C2-type domain. Topologically, residues 29 to 137 (LRVEGGPPSL…LDMGEGTKNR (109 aa)) are extracellular. Cys-50 and Cys-101 are joined by a disulfide. N-linked (GlcNAc...) asparagine glycans are attached at residues Asn-58 and Asn-68. A helical transmembrane segment spans residues 138–159 (IITAEGIILLFCAVVPGTLLLF). The Cytoplasmic segment spans residues 160-220 (RKRWQNEKFG…HIGDAQLEKP (61 aa)). Residues 171–199 (DMPDDYEDENLYEGLNLDDCSMYEDISRG) form the ITAM domain. 2 positions are modified to phosphotyrosine; by SRC-type Tyr-kinases: Tyr-182 and Tyr-193. Asymmetric dimethylarginine; by PRMT1 is present on Arg-198. Tyr-204 is modified (phosphotyrosine; by Tyr-kinases).

In terms of assembly, heterodimer of alpha and beta chains; disulfide-linked. Part of the B-cell antigen receptor complex where the alpha/beta chain heterodimer is non-covalently associated with an antigen-specific membrane-bound surface immunoglobulin of two heavy chains and two light chains. Interacts through its phosphorylated ITAM domain with the SH2 domains of SYK which stimulates SYK autophosphorylation and activation. Also interacts, when phosphorylated on Tyr-204, with the SH2 domain of BLNK/SLP65, bringing BLNK into proximity with SYK and allowing SYK to phosphorylate BLNK which is necessary for trafficking of the BCR to late endosomes. Interacts with Src-family tyrosine kinases including FYN and LYN, increasing their activity. In terms of processing, phosphorylated on tyrosine, serine and threonine residues upon B-cell activation. Phosphorylation of tyrosine residues by Src-family kinases, including LYN, is an early and essential feature of the BCR signaling cascade. The phosphorylated tyrosines serve as docking sites for SH2-domain containing kinases, leading to their activation which in turn leads to phosphorylation of downstream targets. Phosphorylation of serine and threonine residues may prevent subsequent tyrosine phosphorylation. Post-translationally, arginine methylation in the ITAM domain may interfere with the binding of SYK. It promotes signals leading to B-cell differentiation. In terms of tissue distribution, B-cells.

Its subcellular location is the cell membrane. In terms of biological role, required in cooperation with CD79B for initiation of the signal transduction cascade activated by binding of antigen to the B-cell antigen receptor complex (BCR) which leads to internalization of the complex, trafficking to late endosomes and antigen presentation. Also required for BCR surface expression and for efficient differentiation of pro- and pre-B-cells. Stimulates SYK autophosphorylation and activation. Binds to BLNK, bringing BLNK into proximity with SYK and allowing SYK to phosphorylate BLNK. Also interacts with and increases activity of some Src-family tyrosine kinases. Represses BCR signaling during development of immature B-cells. The sequence is that of B-cell antigen receptor complex-associated protein alpha chain (Cd79a) from Mus musculus (Mouse).